The following is a 232-amino-acid chain: Ureidoacrylate amidohydrolase RutB (232 aa).

Residue aspartate 26 is the Proton acceptor of the active site. Residue lysine 135 is part of the active site. Cysteine 168 (nucleophile) is an active-site residue.

The protein belongs to the isochorismatase family. RutB subfamily.

It catalyses the reaction (Z)-3-ureidoacrylate + H2O + H(+) = (Z)-3-aminoacrylate + NH4(+) + CO2. The catalysed reaction is (Z)-3-ureidoacrylate + H2O = (Z)-3-aminoacrylate + carbamate + H(+). The enzyme catalyses (Z)-2-methylureidoacrylate + H2O + H(+) = (Z)-2-methylaminoacrylate + NH4(+) + CO2. Its function is as follows. Hydrolyzes ureidoacrylate to form aminoacrylate and carbamate. The carbamate hydrolyzes spontaneously, thereby releasing one of the nitrogen atoms of the pyrimidine ring as ammonia and one of its carbon atoms as CO2. The sequence is that of Ureidoacrylate amidohydrolase RutB from Cronobacter turicensis (strain DSM 18703 / CCUG 55852 / LMG 23827 / z3032).